The following is a 282-amino-acid chain: Globin-related protein glb-13 (282 aa).

A disordered region spans residues 1–46 (MGQENSKCPHQSLAEKRYKVERPKTKKVSSGSATERCLSTQSDEKN). A compositionally biased stretch (basic and acidic residues) spans 13–23 (LAEKRYKVERP). Residues 28–41 (VSSGSATERCLSTQ) show a composition bias toward polar residues. Residues 100-249 (FLTRRERILL…IISFMRRGFD (150 aa)) form the Globin domain. Histidine 162 and histidine 194 together coordinate heme b.

Belongs to the globin family.

Functionally, involved in oxidative stress resistance. The sequence is that of Globin-related protein glb-13 from Caenorhabditis elegans.